The primary structure comprises 359 residues: G-protein coupled receptor 15 (359 aa).

Over 1 to 33 (MDPEETSVYLDYYYATSPNPDIRETHSHVPYTS) the chain is Extracellular. Residues 34-54 (VFLPVFYTAVFLTGVLGNLVL) form a helical membrane-spanning segment. The Cytoplasmic segment spans residues 55–69 (MGALHFKPGSRRLID). The chain crosses the membrane as a helical span at residues 70-90 (IFIINLAASDFIFLVTLPLWV). Residues 91–120 (DKEASLGLWRTGSFLCKGSSYMISVNMHCS) lie on the Extracellular side of the membrane. The helical transmembrane segment at 121-141 (VFLLTCMSVDRYLAIVCPVVS) threads the bilayer. The Cytoplasmic portion of the chain corresponds to 142 to 149 (RKFRRTDC). The helical transmembrane segment at 150–170 (AYVVCASIWFISCLLGLPTLL) threads the bilayer. Over 171–192 (SRELTLIDDKPYCAEKKATPLK) the chain is Extracellular. A helical membrane pass occupies residues 193 to 213 (LIWSLVALIFTFFVPLLNIVT). The Cytoplasmic segment spans residues 214 to 239 (CYCCIARKLCAHYQQSGRHNKKLKKS). The helical transmembrane segment at 240 to 260 (IKIILIVVAAFLVSWLPFNTF) threads the bilayer. Residues 261–283 (KLLAIVSGLQERYFPSAMLQLGM) lie on the Extracellular side of the membrane. Residues 284–304 (EVSGPLAFANSCVNPFIYYIF) traverse the membrane as a helical segment. Residues 305-359 (DSYIRRAIVHCLCPCLKNYDFGSSTETSDSHLTKALSTFIHAEDFTRRRKRSVSL) are Cytoplasmic-facing. S358 bears the Phosphoserine mark.

The protein belongs to the G-protein coupled receptor 1 family. In terms of assembly, interacts with adapter YWHAE; this interaction promotes ER-to-Golgi transport of GPR15. Phosphorylation is necessary for YWHAE binding and efficient surface expression. In terms of processing, O-glycosylated. Sialylated O-glycans in the N-terminal tail inhibits binding of GPR15LG. Post-translationally, sulfation is required for efficient binding of GPR15LG.

Its subcellular location is the cell membrane. In terms of biological role, g protein-coupled receptor that plays an important role in immune homeostasis. Acts via its natural ligand GPR15LG, a chemokine-like polypeptide strongly expressed in gastrointestinal tissues. GPR15-GPR15LG signaling axis regulates intestinal homeostasis and inflammation through the migration of immune cells. Controls thereby the specific homing of T-cells, particularly FOXP3+ regulatory T-cells (Tregs), to the large intestine lamina propria. Also required for skin localization of thymus-derived dendritic epidermal T-cells. Plays an important role in mediating cytoprotective function as well as angiogenesis of thrombomodulin. Mechanistically, preferentially signals through the Gi/o pathway to inhibit adenylate cyclase activity and activate a phosphatidylinositol-calcium second messenger system that regulates the release of Ca(2+) ions from intracellular stores. The protein is G-protein coupled receptor 15 (GPR15) of Macaca fascicularis (Crab-eating macaque).